Consider the following 307-residue polypeptide: Small ribosomal subunit protein uS2 (307 aa).

The tract at residues G256 to A307 is disordered. Residues A259–A307 show a composition bias toward low complexity.

The protein belongs to the universal ribosomal protein uS2 family.

The sequence is that of Small ribosomal subunit protein uS2 from Nocardioides sp. (strain ATCC BAA-499 / JS614).